A 348-amino-acid chain; its full sequence is Phospho-2-dehydro-3-deoxyheptonate aldolase, Trp-sensitive (348 aa).

It belongs to the class-I DAHP synthase family.

The enzyme catalyses D-erythrose 4-phosphate + phosphoenolpyruvate + H2O = 7-phospho-2-dehydro-3-deoxy-D-arabino-heptonate + phosphate. It participates in metabolic intermediate biosynthesis; chorismate biosynthesis; chorismate from D-erythrose 4-phosphate and phosphoenolpyruvate: step 1/7. Functionally, stereospecific condensation of phosphoenolpyruvate (PEP) and D-erythrose-4-phosphate (E4P) giving rise to 3-deoxy-D-arabino-heptulosonate-7-phosphate (DAHP). This Salmonella typhi protein is Phospho-2-dehydro-3-deoxyheptonate aldolase, Trp-sensitive (aroH).